Reading from the N-terminus, the 314-residue chain is Probable manganese-dependent inorganic pyrophosphatase (314 aa).

Mn(2+) contacts are provided by H7, D11, D13, D72, H94, and D146.

This sequence belongs to the PPase class C family. Requires Mn(2+) as cofactor.

The protein resides in the cytoplasm. It carries out the reaction diphosphate + H2O = 2 phosphate + H(+). The sequence is that of Probable manganese-dependent inorganic pyrophosphatase (ppaC) from Deinococcus radiodurans (strain ATCC 13939 / DSM 20539 / JCM 16871 / CCUG 27074 / LMG 4051 / NBRC 15346 / NCIMB 9279 / VKM B-1422 / R1).